Reading from the N-terminus, the 426-residue chain is Glutamate-1-semialdehyde 2,1-aminomutase (426 aa).

At Lys-265 the chain carries N6-(pyridoxal phosphate)lysine.

It belongs to the class-III pyridoxal-phosphate-dependent aminotransferase family. HemL subfamily. In terms of assembly, homodimer. The cofactor is pyridoxal 5'-phosphate.

The protein localises to the cytoplasm. It carries out the reaction (S)-4-amino-5-oxopentanoate = 5-aminolevulinate. It functions in the pathway porphyrin-containing compound metabolism; protoporphyrin-IX biosynthesis; 5-aminolevulinate from L-glutamyl-tRNA(Glu): step 2/2. This is Glutamate-1-semialdehyde 2,1-aminomutase from Akkermansia muciniphila (strain ATCC BAA-835 / DSM 22959 / JCM 33894 / BCRC 81048 / CCUG 64013 / CIP 107961 / Muc).